The primary structure comprises 63 residues: Large ribosomal subunit protein bL28 (63 aa).

Belongs to the bacterial ribosomal protein bL28 family.

In Clostridium botulinum (strain Alaska E43 / Type E3), this protein is Large ribosomal subunit protein bL28.